A 431-amino-acid polypeptide reads, in one-letter code: Probable sodium/metabolite cotransporter BASS3, chloroplastic (431 aa).

The N-terminal 70 residues, 1–70 (MTLIASLSLP…RRNSGLVPVV (70 aa)), are a transit peptide targeting the chloroplast. Helical transmembrane passes span 110-130 (FWSALLPFVVALTAVAALSYP), 145-165 (LGGIMLSIGIQLSVDDFALAF), 169-189 (VPLSVGFVAQYVLKPLLGVLV), 198-218 (TFYAGFILTCCVAGAQLSSYA), 238-258 (IASVIFTPLLSGLLIGSVVPV), 261-281 (VAMSKSILQVVLVPITLGLVL), 288-308 (VVTLLQPVMPFVAMVCTSLCI), 325-345 (LGLIVPIVTFHAVAFALGYWF), and 387-407 (VPAACSVVVMAIMGLCLASFW).

This sequence belongs to the bile acid:sodium symporter (BASS) (TC 2.A.28) family.

Its subcellular location is the membrane. The protein resides in the plastid. It localises to the chloroplast envelope. Functionally, may function as sodium-coupled metabolite transporter across the chloroplast envelope. The protein is Probable sodium/metabolite cotransporter BASS3, chloroplastic (BASS3) of Arabidopsis thaliana (Mouse-ear cress).